The following is a 733-amino-acid chain: Exosome complex exonuclease RRP6 (733 aa).

The residue at position 138 (Ser138) is a Phosphoserine. The region spanning 214–380 (IWVDTSTELE…NIYDQLRNKL (167 aa)) is the 3'-5' exonuclease domain. Mn(2+)-binding residues include Asp238 and Glu240. Positions 238 and 240 each coordinate Zn(2+). AMP is bound by residues Glu240 and His241. UMP is bound by residues Glu240 and His241. Mn(2+) is bound at residue Asp296. AMP contacts are provided by Trp299, Lys342, and Gln345. The UMP site is built by Trp299, Lys342, and Gln345. Asp365 is a binding site for Mn(2+). Residue Asp365 participates in Zn(2+) binding. In terms of domain architecture, HRDC spans 435-515 (PPEREVLVRE…RDALRNIKNT (81 aa)). Position 520 is a phosphothreonine (Thr520). Phosphoserine is present on residues Ser640 and Ser645. The interval 662 to 733 (IQKKQPAKEK…AKGKNLSFKR (72 aa)) is disordered. Positions 667–680 (PAKEKGVTEKDAVD) are enriched in basic and acidic residues. A compositionally biased stretch (polar residues) spans 687 to 697 (ILSNKPGQNNR). Short sequence motifs (nuclear localization signal) lie at residues 700–704 (KKRRF) and 718–721 (KKRR). Positions 716 to 733 (AAKKRRPAAKGKNLSFKR) are enriched in basic residues.

This sequence belongs to the exosome component 10/RRP6 family. In terms of assembly, component of the RNA exosome complex. Specifically part of the catalytically inactive RNA exosome core complex (Exo-9) which may associate with the catalytic subunits RRP6 and DIS3 in cytoplasmic- and nuclear-specific RNA exosome complex forms. Exo-9 is formed by a hexameric base ring of RNase PH domain-containing subunits and a cap ring consisting of CSL4, RRP4 and RRP40. RRP6 specifically is part of the nuclear form of the RNA exosome complex; the association appears to be mediated by Exo-9 and not by DIS3. Interacts with LRP1. Interacts with NPL3, NOP53 and PAP1.

Its subcellular location is the nucleus. It is found in the nucleolus. Its function is as follows. Nuclear-specific catalytic component of the RNA exosome complex which has 3'-&gt;5' exoribonuclease activity and participates in a multitude of cellular RNA processing and degradation events. In the nucleus, the RNA exosome complex is involved in proper maturation of stable RNA species such as rRNA, snRNA and snoRNA, in the elimination of RNA processing by-products and non-coding 'pervasive' transcripts, such as antisense RNA species and cryptic unstable transcripts (CUTs), and of mRNAs with processing defects, thereby limiting or excluding their export to the cytoplasm. The catalytic inactive RNA exosome core complex of 9 subunits (Exo-9) is proposed to play a pivotal role in the binding and presentation of RNA for ribonucleolysis, and to serve as a scaffold for the association with catalytic subunits and accessory proteins or complexes. RRP6 has 3'-5' exonuclease activity which is not modulated upon association with Exo-9 suggesting that the complex inner RNA-binding path is not used to access its active site. In Saccharomyces cerevisiae (strain ATCC 204508 / S288c) (Baker's yeast), this protein is Exosome complex exonuclease RRP6 (RRP6).